The chain runs to 333 residues: Receptor polysaccharide phosphotransferase WefC (333 aa).

It belongs to the stealth family.

Its function is as follows. Part of the type 2Gn receptor polysaccharide (RPS) biosynthesis locus. Essential for cell surface RPS production, and for synthesis of the host-like GalNAc beta 1-3Gal (Gn) motif of the RPS. Probably encodes a 1-3Gal alpha transferase. In Streptococcus gordonii, this protein is Receptor polysaccharide phosphotransferase WefC (wefC).